A 302-amino-acid chain; its full sequence is F-box protein SKIP19 (302 aa).

The F-box domain maps to Ser-16–Ile-63.

As to quaternary structure, part of a SCF (ASK-cullin-F-box) protein ligase complex. Interacts with CUL1 and SPK1B/ASK2.

It localises to the nucleus. The protein operates within protein modification; protein ubiquitination. Component of SCF(ASK-cullin-F-box) E3 ubiquitin ligase complexes, which may mediate the ubiquitination and subsequent proteasomal degradation of target proteins. This Arabidopsis thaliana (Mouse-ear cress) protein is F-box protein SKIP19 (SKIP19).